Reading from the N-terminus, the 440-residue chain is Thymidine phosphorylase (440 aa).

Belongs to the thymidine/pyrimidine-nucleoside phosphorylase family. Homodimer.

It catalyses the reaction thymidine + phosphate = 2-deoxy-alpha-D-ribose 1-phosphate + thymine. Its pathway is pyrimidine metabolism; dTMP biosynthesis via salvage pathway; dTMP from thymine: step 1/2. In terms of biological role, the enzymes which catalyze the reversible phosphorolysis of pyrimidine nucleosides are involved in the degradation of these compounds and in their utilization as carbon and energy sources, or in the rescue of pyrimidine bases for nucleotide synthesis. This is Thymidine phosphorylase from Yersinia enterocolitica serotype O:8 / biotype 1B (strain NCTC 13174 / 8081).